Consider the following 359-residue polypeptide: MDDQDPGGISPLQQMVASGAGAVVTSLFMTPLDVVKVRLQSQRPSATSELTTPSRFWSLSYTKSSSALQSPGKCLLYCNGVLEPLYLCPNGTRCATWFQDPTRFTGTLDAFVKIVRHEGTRTLWSGLPATLVMTVPATAIYFTAYDQLKAFLCGQSLTSDLYAPMVAGALARMGTVTVVSPLELVRTKLQAQHVSYRELASSVQAAVTQGGWRSLWLGWGPTALRDVPFSALYWFNYELVKSWLSGLRPKDQTSVGISFVAGGISGMVAATLTLPFDVVKTQRQMSLGAVEAVRVKPPRVDSTWLLLRRIRAESGTRGLFAGFLPRIIKAAPSCAIMISTYEFGKSFFQRLNQEQPLGR.

The Mitochondrial intermembrane segment spans residues 1–14 (MDDQDPGGISPLQQ). 3 Solcar repeats span residues 9 to 151 (ISPL…LKAF), 159 to 243 (SDLY…VKSW), and 253 to 347 (TSVG…GKSF). Residues 15-35 (MVASGAGAVVTSLFMTPLDVV) traverse the membrane as a helical segment. Residues 36 to 121 (KVRLQSQRPS…VKIVRHEGTR (86 aa)) lie on the Mitochondrial matrix side of the membrane. [2Fe-2S] cluster contacts are provided by C74, C78, C88, and C94. A helical membrane pass occupies residues 122–142 (TLWSGLPATLVMTVPATAIYF). Topologically, residues 143 to 164 (TAYDQLKAFLCGQSLTSDLYAP) are mitochondrial intermembrane. The chain crosses the membrane as a helical span at residues 165-185 (MVAGALARMGTVTVVSPLELV). Topologically, residues 186-214 (RTKLQAQHVSYRELASSVQAAVTQGGWRS) are mitochondrial matrix. The chain crosses the membrane as a helical span at residues 215–235 (LWLGWGPTALRDVPFSALYWF). Topologically, residues 236-255 (NYELVKSWLSGLRPKDQTSV) are mitochondrial intermembrane. The helical transmembrane segment at 256–276 (GISFVAGGISGMVAATLTLPF) threads the bilayer. Residues 277 to 317 (DVVKTQRQMSLGAVEAVRVKPPRVDSTWLLLRRIRAESGTR) lie on the Mitochondrial matrix side of the membrane. The helical transmembrane segment at 318 to 338 (GLFAGFLPRIIKAAPSCAIMI) threads the bilayer. Over 339-359 (STYEFGKSFFQRLNQEQPLGR) the chain is Mitochondrial intermembrane.

This sequence belongs to the mitochondrial carrier (TC 2.A.29) family. Post-translationally, cleaved and degraded by AFG3L2; degradation by AFG3L2 is regulated by the ability of SLC25A39 to bind iron-sulfur. In absence of mitochondrial glutathione, SLC25A39 binds iron-sulfur, preventing cleavage and degradation by AFG3L2. The presence of mitochondrial glutathione prevents iron-sulfur-binding to SLC25A39, promoting cleavage and degradation by AFG3L2. As to expression, abundant expression in bone marrow, spleen, testis and kidney.

The protein resides in the mitochondrion inner membrane. It carries out the reaction glutathione(in) = glutathione(out). The activity of SLC25A39 is regulated by levels of mitochondrial glutathione via its ability to bind [2Fe-2S] iron-sulfur cluster. Upon physiological levels of mitochondrial glutathione, glutathione prevents iron-sulfur-binding to SLC25A39 promoting cleavage and degradation by AFG3L2. Upon depletion of mitochondrial glutathione, SLC25A39 binds iron-sulfur, preventing cleavage and degradation by AFG3L2. Mitochondrial transporter required for glutathione import into mitochondria. Glutathione, which plays key roles in oxidative metabolism, is produced exclusively in the cytosol and is imported in many organelles. Mitochondrial glutathione is required for the activity and stability of proteins containing iron-sulfur clusters, as well as erythropoiesis. In Mus musculus (Mouse), this protein is Mitochondrial glutathione transporter SLC25A39.